The chain runs to 87 residues: Small ribosomal subunit protein bS20 (87 aa).

Residues 1–11 show a composition bias toward basic residues; that stretch reads MANIKSAKKRA. A disordered region spans residues 1 to 26; that stretch reads MANIKSAKKRAVQSEKRRQHNASQRS.

It belongs to the bacterial ribosomal protein bS20 family.

Binds directly to 16S ribosomal RNA. This Actinobacillus pleuropneumoniae serotype 5b (strain L20) protein is Small ribosomal subunit protein bS20.